The chain runs to 359 residues: Protein Wnt-5b (359 aa).

The first 17 residues, 1-17 (MPSLLLLFTAALLSSWA), serve as a signal peptide directing secretion. Cys83 and Cys94 are joined by a disulfide. 2 N-linked (GlcNAc...) asparagine glycosylation sites follow: Asn93 and Asn99. Intrachain disulfides connect Cys133–Cys141, Cys143–Cys161, Cys217–Cys231, Cys219–Cys226, Cys288–Cys319, Cys304–Cys314, Cys318–Cys358, Cys334–Cys349, Cys336–Cys346, and Cys341–Cys342. The O-palmitoleoyl serine; by PORCN moiety is linked to residue Ser223. Asn291 and Asn305 each carry an N-linked (GlcNAc...) asparagine glycan.

This sequence belongs to the Wnt family. As to quaternary structure, interacts with PORCN. In terms of processing, palmitoleoylation is required for efficient binding to frizzled receptors. Depalmitoleoylation leads to Wnt signaling pathway inhibition.

It is found in the secreted. It localises to the extracellular space. The protein resides in the extracellular matrix. In terms of biological role, ligand for members of the frizzled family of seven transmembrane receptors. Probable developmental protein. May be a signaling molecule which affects the development of discrete regions of tissues. Is likely to signal over only few cell diameters. The polypeptide is Protein Wnt-5b (WNT5B) (Pongo abelii (Sumatran orangutan)).